Consider the following 477-residue polypeptide: UDP-galactose-lipid carrier transferase (477 aa).

6 helical membrane-spanning segments follow: residues 16–36 (SLAL…IVLI), 52–72 (LDLK…WFWV), 93–113 (TILI…WELS), 115–135 (WIWI…RACV), 175–195 (VIAF…GVPV), and 284–304 (FDLV…VILI). Residues 305-477 (FMVSRDGGAP…GVVLKRDGAY (173 aa)) lie on the Cytoplasmic side of the membrane.

The protein belongs to the bacterial sugar transferase family.

The protein localises to the cell membrane. The protein operates within glycan metabolism; exopolysaccharide biosynthesis. Involved in the biosynthesis of amylovoran which functions as a virulence factor. May act as a sugar transferase and may be involved in the export of the repeating unit by flipping the lipid carrier to the periplasmic face of the inner membrane. This Erwinia amylovora (Fire blight bacteria) protein is UDP-galactose-lipid carrier transferase (amsG).